A 277-amino-acid polypeptide reads, in one-letter code: MGIKIYRPKTSSLRYKTTLSFDELSKGNDPLKSLTKGKVSRAGRDSSGRISVRRRGGGHKRRYREIDFARRDKFGIPARVAAIEYDPNRSPNIALLVYRDGDKRYIIAPKGVKVGDILESGPNAPIKIGNALPLENIPVGKMVHNIELNIGKGGQLVRGAGGYAMIIASDGDYVTVKLPSGEMRMIFKKCIATLGEVGNEDYMNVSIGKAGKSRWLGRRPKVRGVAMNPIDHPHGGGEGKTSGGRHPVSPWGQPAKGYKTRKKNKYSDKFIVKRRNN.

2 disordered regions span residues 32–58 and 225–277; these read KSLT…RGGG and VAMN…RRNN.

The protein belongs to the universal ribosomal protein uL2 family. Part of the 50S ribosomal subunit. Forms a bridge to the 30S subunit in the 70S ribosome.

One of the primary rRNA binding proteins. Required for association of the 30S and 50S subunits to form the 70S ribosome, for tRNA binding and peptide bond formation. It has been suggested to have peptidyltransferase activity; this is somewhat controversial. Makes several contacts with the 16S rRNA in the 70S ribosome. The sequence is that of Large ribosomal subunit protein uL2 from Borrelia recurrentis (strain A1).